Consider the following 94-residue polypeptide: Pyrimidine/purine nucleoside phosphorylase (94 aa).

This sequence belongs to the nucleoside phosphorylase PpnP family.

It carries out the reaction a purine D-ribonucleoside + phosphate = a purine nucleobase + alpha-D-ribose 1-phosphate. It catalyses the reaction adenosine + phosphate = alpha-D-ribose 1-phosphate + adenine. The enzyme catalyses cytidine + phosphate = cytosine + alpha-D-ribose 1-phosphate. The catalysed reaction is guanosine + phosphate = alpha-D-ribose 1-phosphate + guanine. It carries out the reaction inosine + phosphate = alpha-D-ribose 1-phosphate + hypoxanthine. It catalyses the reaction thymidine + phosphate = 2-deoxy-alpha-D-ribose 1-phosphate + thymine. The enzyme catalyses uridine + phosphate = alpha-D-ribose 1-phosphate + uracil. The catalysed reaction is xanthosine + phosphate = alpha-D-ribose 1-phosphate + xanthine. Functionally, catalyzes the phosphorolysis of diverse nucleosides, yielding D-ribose 1-phosphate and the respective free bases. Can use uridine, adenosine, guanosine, cytidine, thymidine, inosine and xanthosine as substrates. Also catalyzes the reverse reactions. The polypeptide is Pyrimidine/purine nucleoside phosphorylase (Salmonella typhimurium (strain LT2 / SGSC1412 / ATCC 700720)).